Here is a 430-residue protein sequence, read N- to C-terminus: Tol-Pal system protein TolB (430 aa).

The first 21 residues, 1-21 (MKQAFRVALGFLILWASVLHA), serve as a signal peptide directing secretion.

Belongs to the TolB family. In terms of assembly, the Tol-Pal system is composed of five core proteins: the inner membrane proteins TolA, TolQ and TolR, the periplasmic protein TolB and the outer membrane protein Pal. They form a network linking the inner and outer membranes and the peptidoglycan layer.

The protein localises to the periplasm. Its function is as follows. Part of the Tol-Pal system, which plays a role in outer membrane invagination during cell division and is important for maintaining outer membrane integrity. TolB occupies a key intermediary position in the Tol-Pal system because it communicates directly with both membrane-embedded components, Pal in the outer membrane and TolA in the inner membrane. The chain is Tol-Pal system protein TolB from Serratia proteamaculans (strain 568).